Consider the following 211-residue polypeptide: tRNA (guanine-N(7)-)-methyltransferase (211 aa).

Positions 44, 69, 96, and 118 each coordinate S-adenosyl-L-methionine. The active site involves D118. K122 is a binding site for substrate. An interaction with RNA region spans residues 124-129; that stretch reads RHEKRR. Residues D154 and 191 to 194 each bind substrate; that span reads TEYE.

This sequence belongs to the class I-like SAM-binding methyltransferase superfamily. TrmB family.

It carries out the reaction guanosine(46) in tRNA + S-adenosyl-L-methionine = N(7)-methylguanosine(46) in tRNA + S-adenosyl-L-homocysteine. It participates in tRNA modification; N(7)-methylguanine-tRNA biosynthesis. Its function is as follows. Catalyzes the formation of N(7)-methylguanine at position 46 (m7G46) in tRNA. This Streptococcus mutans serotype c (strain ATCC 700610 / UA159) protein is tRNA (guanine-N(7)-)-methyltransferase.